We begin with the raw amino-acid sequence, 172 residues long: MINKHNSVLHNQFWQSYNHRGFMVTKLSDLMSYVSSWARSNSLWPMTFGLACCAVEMMHTAASKYDLDRYGIMFRASPRQADVMIVAGTLTNKMAPALRKVYDQMTEPRYVISMGSCANGGGYYHYSYSVVRGCDRIVPVDIYVPGCPPTAEALLYGILCLQQKINRTATST.

Residues C52, C53, C117, and C147 each coordinate [4Fe-4S] cluster.

This sequence belongs to the complex I 20 kDa subunit family. As to quaternary structure, NDH-1 is composed of 14 different subunits. Subunits NuoB, C, D, E, F, and G constitute the peripheral sector of the complex. Requires [4Fe-4S] cluster as cofactor.

It localises to the cell inner membrane. The catalysed reaction is a quinone + NADH + 5 H(+)(in) = a quinol + NAD(+) + 4 H(+)(out). In terms of biological role, NDH-1 shuttles electrons from NADH, via FMN and iron-sulfur (Fe-S) centers, to quinones in the respiratory chain. Couples the redox reaction to proton translocation (for every two electrons transferred, four hydrogen ions are translocated across the cytoplasmic membrane), and thus conserves the redox energy in a proton gradient. This Ehrlichia ruminantium (strain Gardel) protein is NADH-quinone oxidoreductase subunit B.